The chain runs to 223 residues: Type III pantothenate kinase (223 aa).

17-24 (DIGNTRIH) provides a ligand contact to ATP. Substrate is bound by residues Tyr-81 and 85–88 (GIDR). Catalysis depends on Asp-87, which acts as the Proton acceptor. Asp-102 is a binding site for K(+). Residue Ser-105 coordinates ATP. Substrate is bound at residue Thr-157.

Belongs to the type III pantothenate kinase family. Homodimer. NH4(+) serves as cofactor. The cofactor is K(+).

Its subcellular location is the cytoplasm. The catalysed reaction is (R)-pantothenate + ATP = (R)-4'-phosphopantothenate + ADP + H(+). It participates in cofactor biosynthesis; coenzyme A biosynthesis; CoA from (R)-pantothenate: step 1/5. Functionally, catalyzes the phosphorylation of pantothenate (Pan), the first step in CoA biosynthesis. The chain is Type III pantothenate kinase from Helicobacter pylori (strain J99 / ATCC 700824) (Campylobacter pylori J99).